The chain runs to 753 residues: 5-methyltetrahydropteroyltriglutamate--homocysteine methyltransferase (753 aa).

5-methyltetrahydropteroyltri-L-glutamate is bound by residues 19–22 (RELK) and arginine 113. Residues 430–432 (IGS) and glutamate 483 contribute to the L-homocysteine site. L-methionine-binding positions include 430-432 (IGS) and glutamate 483. 5-methyltetrahydropteroyltri-L-glutamate-binding positions include 514 to 515 (RC) and tryptophan 560. Position 598 (aspartate 598) interacts with L-homocysteine. Position 598 (aspartate 598) interacts with L-methionine. Residue glutamate 604 participates in 5-methyltetrahydropteroyltri-L-glutamate binding. Zn(2+) contacts are provided by histidine 640, cysteine 642, and glutamate 664. Histidine 693 functions as the Proton donor in the catalytic mechanism. Position 725 (cysteine 725) interacts with Zn(2+).

This sequence belongs to the vitamin-B12 independent methionine synthase family. The cofactor is Zn(2+).

The enzyme catalyses 5-methyltetrahydropteroyltri-L-glutamate + L-homocysteine = tetrahydropteroyltri-L-glutamate + L-methionine. It participates in amino-acid biosynthesis; L-methionine biosynthesis via de novo pathway; L-methionine from L-homocysteine (MetE route): step 1/1. Functionally, catalyzes the transfer of a methyl group from 5-methyltetrahydrofolate to homocysteine resulting in methionine formation. This chain is 5-methyltetrahydropteroyltriglutamate--homocysteine methyltransferase, found in Rhodococcus jostii (strain RHA1).